The primary structure comprises 362 residues: Peptide chain release factor 1 (362 aa).

Glutamine 235 is modified (N5-methylglutamine).

It belongs to the prokaryotic/mitochondrial release factor family. Post-translationally, methylated by PrmC. Methylation increases the termination efficiency of RF1.

The protein resides in the cytoplasm. Peptide chain release factor 1 directs the termination of translation in response to the peptide chain termination codons UAG and UAA. The polypeptide is Peptide chain release factor 1 (Acinetobacter baylyi (strain ATCC 33305 / BD413 / ADP1)).